The primary structure comprises 175 residues: Zinc finger A20 and AN1 domain-containing stress-associated protein 7 (175 aa).

The A20-type zinc finger occupies 13 to 47; sequence PTEPKLCDNGCGFFGSPSNMNLCSKCYRSLRAEED. Zn(2+)-binding residues include Cys-19, Cys-23, Cys-35, Cys-38, Cys-116, Cys-119, Cys-130, Cys-132, Cys-137, His-140, His-146, and Cys-148. Residues 110-156 form an AN1-type zinc finger; it reads VRPNNRCFSCNKKVGVMGFKCKCGSTFCGSHRYPEKHECSFDFKEVG.

Its function is as follows. May be involved in environmental stress response. This Arabidopsis thaliana (Mouse-ear cress) protein is Zinc finger A20 and AN1 domain-containing stress-associated protein 7 (SAP7).